The following is a 216-amino-acid chain: Ribonuclease HII (216 aa).

An RNase H type-2 domain is found at 27–216 (ASLAGVDEAG…VKEHVKNCEG (190 aa)). Positions 33, 34, and 125 each coordinate a divalent metal cation.

The protein belongs to the RNase HII family. Requires Mn(2+) as cofactor. Mg(2+) is required as a cofactor.

It is found in the cytoplasm. It catalyses the reaction Endonucleolytic cleavage to 5'-phosphomonoester.. Its function is as follows. Endonuclease that specifically degrades the RNA of RNA-DNA hybrids. The chain is Ribonuclease HII from Geotalea daltonii (strain DSM 22248 / JCM 15807 / FRC-32) (Geobacter daltonii).